Consider the following 299-residue polypeptide: Zinc-alpha-2-glycoprotein (299 aa).

An N-terminal signal peptide occupies residues 1-17 (MVPVLLALLLLLGPAVS). Residues asparagine 24, asparagine 125, and asparagine 256 are each glycosylated (N-linked (GlcNAc...) asparagine). Intrachain disulfides connect cysteine 120/cysteine 183 and cysteine 222/cysteine 277. An Ig-like C1-type domain is found at 204–289 (PSVSVTGHAA…EHRSLTRPLT (86 aa)).

The protein belongs to the MHC class I family. As to quaternary structure, interacts with PIP.

The protein resides in the secreted. Its function is as follows. Stimulates lipid degradation in adipocytes and causes the extensive fat losses associated with some advanced cancers. In Bos taurus (Bovine), this protein is Zinc-alpha-2-glycoprotein (AZGP1).